We begin with the raw amino-acid sequence, 246 residues long: 5'-nucleotidase SurE (246 aa).

A divalent metal cation is bound by residues D8, D9, S39, and N91.

Belongs to the SurE nucleotidase family. Requires a divalent metal cation as cofactor.

The protein localises to the cytoplasm. It catalyses the reaction a ribonucleoside 5'-phosphate + H2O = a ribonucleoside + phosphate. Functionally, nucleotidase that shows phosphatase activity on nucleoside 5'-monophosphates. The chain is 5'-nucleotidase SurE from Actinobacillus succinogenes (strain ATCC 55618 / DSM 22257 / CCUG 43843 / 130Z).